The following is a 405-amino-acid chain: Glutathione S-transferase LANCL1 (405 aa).

Cysteine 282 is a Zn(2+) binding site. Lysine 323 serves as a coordination point for glutathione. Residues cysteine 328 and histidine 329 each contribute to the Zn(2+) site. Arginine 370–aspartate 373 provides a ligand contact to glutathione.

This sequence belongs to the LanC-like protein family.

It is found in the cytoplasm. It localises to the cell membrane. The catalysed reaction is RX + glutathione = an S-substituted glutathione + a halide anion + H(+). It carries out the reaction 1-chloro-2,4-dinitrobenzene + glutathione = 2,4-dinitrophenyl-S-glutathione + chloride + H(+). In terms of biological role, functions as a glutathione transferase. Catalyzes conjugation of the glutathione (GSH) to artificial substrates 1-chloro-2,4-dinitrobenzene (CDNB) and p-nitrophenyl acetate. Binds glutathione. The protein is Glutathione S-transferase LANCL1 of Danio rerio (Zebrafish).